The sequence spans 205 residues: Small ribosomal subunit protein uS4c (205 aa).

Positions 93–154 constitute an S4 RNA-binding domain; that stretch reads MRLDNTIFRL…RTQTIALIQQ (62 aa).

This sequence belongs to the universal ribosomal protein uS4 family. In terms of assembly, part of the 30S ribosomal subunit. Contacts protein S5. The interaction surface between S4 and S5 is involved in control of translational fidelity.

The protein resides in the plastid. It localises to the chloroplast. Functionally, one of the primary rRNA binding proteins, it binds directly to 16S rRNA where it nucleates assembly of the body of the 30S subunit. Its function is as follows. With S5 and S12 plays an important role in translational accuracy. In Chaetosphaeridium globosum (Charophycean green alga), this protein is Small ribosomal subunit protein uS4c (rps4).